The chain runs to 178 residues: Nicotinamide-nucleotide adenylyltransferase (178 aa).

Belongs to the archaeal NMN adenylyltransferase family.

The protein resides in the cytoplasm. The catalysed reaction is beta-nicotinamide D-ribonucleotide + ATP + H(+) = diphosphate + NAD(+). The protein operates within cofactor biosynthesis; NAD(+) biosynthesis; NAD(+) from nicotinamide D-ribonucleotide: step 1/1. In Pyrobaculum arsenaticum (strain DSM 13514 / JCM 11321 / PZ6), this protein is Nicotinamide-nucleotide adenylyltransferase.